The chain runs to 339 residues: Phenylalanine--tRNA ligase alpha subunit (339 aa).

Glu-262 lines the Mg(2+) pocket.

This sequence belongs to the class-II aminoacyl-tRNA synthetase family. Phe-tRNA synthetase alpha subunit type 1 subfamily. As to quaternary structure, tetramer of two alpha and two beta subunits. Requires Mg(2+) as cofactor.

It localises to the cytoplasm. It carries out the reaction tRNA(Phe) + L-phenylalanine + ATP = L-phenylalanyl-tRNA(Phe) + AMP + diphosphate + H(+). This chain is Phenylalanine--tRNA ligase alpha subunit, found in Neisseria gonorrhoeae (strain ATCC 700825 / FA 1090).